A 411-amino-acid chain; its full sequence is F-box/kelch-repeat protein At3g61590 (411 aa).

Residues 37-83 (FSMDSLLPDDLLERILSFLPIASIFRAGTVCKRWNEIVSSRRFLCNF) enclose the F-box domain. Kelch repeat units lie at residues 81 to 135 (CNFS…SSCG), 137 to 178 (VCFM…MSTS), 196 to 246 (SIVK…ICNN), 251 to 299 (MIYS…LMNL), 302 to 350 (RLVI…EFDE), and 352 to 401 (FASS…FTGF).

Part of a SCF (ASK-cullin-F-box) protein ligase complex. Interacts with SKP1A/ASK1, SKP1B/ASK2, ASK3, ASK9, ASK11, ASK12, ASK13, ASK14, ASK16 and ASK18.

Its pathway is protein modification; protein ubiquitination. Component of SCF(ASK-cullin-F-box) E3 ubiquitin ligase complexes, which may mediate the ubiquitination and subsequent proteasomal degradation of target proteins. This Arabidopsis thaliana (Mouse-ear cress) protein is F-box/kelch-repeat protein At3g61590.